The primary structure comprises 1407 residues: Probable phosphoribosylformylglycinamidine synthase, chloroplastic/mitochondrial (1407 aa).

Residues 1–53 (MNTSQATRAALFLNGSNRQAMLLQRSSMSQLWGSVRMRTSRLSLNRTKAVSLR) constitute a chloroplast and mitochondrion transit peptide. ATP contacts are provided by residues 407–418 (GAETGAGGRIRD), 487–489 (QGY), and alanine 786. Aspartate 787, glutamate 826, asparagine 830, and aspartate 989 together coordinate Mg(2+). Serine 991 is a binding site for ATP. In terms of domain architecture, Glutamine amidotransferase type-1 spans 1141–1381 (KVAVIREEGS…LMWQFPWYPT (241 aa)). Cysteine 1235 acts as the Nucleophile in catalysis. Active-site residues include histidine 1366 and glutamate 1368.

This sequence in the N-terminal section; belongs to the FGAMS family.

It localises to the plastid. Its subcellular location is the chloroplast. The protein localises to the mitochondrion. It carries out the reaction N(2)-formyl-N(1)-(5-phospho-beta-D-ribosyl)glycinamide + L-glutamine + ATP + H2O = 2-formamido-N(1)-(5-O-phospho-beta-D-ribosyl)acetamidine + L-glutamate + ADP + phosphate + H(+). It participates in purine metabolism; IMP biosynthesis via de novo pathway; 5-amino-1-(5-phospho-D-ribosyl)imidazole from N(2)-formyl-N(1)-(5-phospho-D-ribosyl)glycinamide: step 1/2. Its function is as follows. Essential to the male gametophyte development. Phosphoribosylformylglycinamidine synthase involved in the purines biosynthetic pathway. Catalyzes the ATP-dependent conversion of formylglycinamide ribonucleotide (FGAR) and glutamine to yield formylglycinamidine ribonucleotide (FGAM) and glutamate. This is Probable phosphoribosylformylglycinamidine synthase, chloroplastic/mitochondrial from Arabidopsis thaliana (Mouse-ear cress).